The sequence spans 814 residues: Probable G-protein coupled receptor 156 (814 aa).

At 1-47 (MEPEINCSELCDSFPGQELDRRPLHDLCKTTITSSHHSSKTISSLSP) the chain is on the extracellular side. N-linked (GlcNAc...) asparagine glycosylation is present at Asn6. The chain crosses the membrane as a helical span at residues 48–68 (VLLGIVWTFLSCGLLLILFFL). At 69–86 (AFTIHCRKNRIVKMSSPN) the chain is on the cytoplasmic side. Residues 87 to 107 (LNIVTLLGSCLTYSSAYLFGI) traverse the membrane as a helical segment. Topologically, residues 108-118 (QDVLVGSSMET) are extracellular. Residues 119-139 (LIQTRLSMLCIGTSLVFGPIL) traverse the membrane as a helical segment. Over 140 to 164 (GKSWRLYKVFTQRVPDKRVIIKDLQ) the chain is Cytoplasmic. Residues 165 to 185 (LLGLVAALLMADVILLMTWVL) form a helical membrane-spanning segment. The Extracellular segment spans residues 186 to 222 (TDPIQCLQILSVSMTVTGKDVSCTSTSTHFCASRYSD). A helical membrane pass occupies residues 223–243 (VWIALIWGCKGLLLLYGAYLA). The Cytoplasmic segment spans residues 244–257 (GLTGHVSSPPVNQS). The helical transmembrane segment at 258-278 (LTIMVGVNLLVLAAGLLFVVT) threads the bilayer. Residues 279 to 288 (RYLHSWPNLV) lie on the Extracellular side of the membrane. A helical membrane pass occupies residues 289-309 (FGLTSGGIFVCTTTINCFIFI). Residues 310–814 (PQLKQWKAFE…FKDDLKPTLV (505 aa)) are Cytoplasmic-facing. A coiled-coil region spans residues 354–390 (EKSSMERLLTEKNAVIESLQEQVNNAKEKIVRLMSAE). Disordered stretches follow at residues 422–545 (AQGP…SSVI), 557–724 (GLGP…PEQW), and 769–792 (SSSDSSDSGTSDTDPEPTGGLASW). Over residues 443–454 (SQCTSGPSSYAQ) the composition is skewed to polar residues. A compositionally biased stretch (basic and acidic residues) spans 468 to 484 (GKEEKISDSKDFSDHLD). Over residues 486 to 496 (GCSQKPWTEQS) the composition is skewed to polar residues. A compositionally biased stretch (basic and acidic residues) spans 523–545 (QRQRHLENSEEPPERRSRVSSVI). The span at 563-581 (SLSTAPSCHQQTWKNSAAF) shows a compositional bias: polar residues. The segment covering 599–610 (VRRRRAAQRARS) has biased composition (basic residues). Residues 639–651 (NGDSPSLAPQTTD) are compositionally biased toward polar residues. Over residues 769–780 (SSSDSSDSGTSD) the composition is skewed to low complexity.

Belongs to the G-protein coupled receptor 3 family. GABA-B receptor subfamily. In terms of tissue distribution, ubiquitous expression both in the CNS and in peripheral tissues. Very high expression in fetal brain and testis relative to expression in other tissues.

It is found in the cell membrane. Orphan G-protein coupled receptor involved in the regulation of hair cell orientation in mechanosensory organs of the inner ear. It is required to trigger a 180 degree reversal in hair cell orientation, creating a virtual line of polarity reversal (LPR) across which stereociliary bundles are arranged in opposite orientations. The polypeptide is Probable G-protein coupled receptor 156 (GPR156) (Homo sapiens (Human)).